Reading from the N-terminus, the 184-residue chain is Peptide deformylase (184 aa).

Fe cation-binding residues include cysteine 111 and histidine 154. Glutamate 155 is an active-site residue. Residue histidine 158 coordinates Fe cation.

Belongs to the polypeptide deformylase family. It depends on Fe(2+) as a cofactor.

The catalysed reaction is N-terminal N-formyl-L-methionyl-[peptide] + H2O = N-terminal L-methionyl-[peptide] + formate. Its function is as follows. Removes the formyl group from the N-terminal Met of newly synthesized proteins. Requires at least a dipeptide for an efficient rate of reaction. N-terminal L-methionine is a prerequisite for activity but the enzyme has broad specificity at other positions. This chain is Peptide deformylase, found in Lactobacillus delbrueckii subsp. bulgaricus (strain ATCC 11842 / DSM 20081 / BCRC 10696 / JCM 1002 / NBRC 13953 / NCIMB 11778 / NCTC 12712 / WDCM 00102 / Lb 14).